The chain runs to 631 residues: MTVIDKNDLAVFEKYYLDTLQTTFLQKAEKVAHATRQFSDDGNIFVNMNTWSSAVDFGIVLHTLIGYGVRFNNRNDELYENEELAYGLYEAMHLIYEHLPDPAPTHSAPLGLIVPDWYHFSITMPECFQNTCIVLRDHYDLRELTESLLHYYLPLPTLSMGLWRTAGNAMRMCLPYCYGQLLRGYTFAEIGDETQVQYVLDLIKFPLVKSGNGIHYDYAYFDHTDVRAYGYLVNSYFTFSYYNFLFGEETVNMQNVYNSLSLIGSNQGIVNPGLLSRNGSNYSAVLAHLIEFVDGVFSGDFSKILTVRNNRYFGSVVGQSPDIAYYEADPNNSLHAPLWAMTRRIWSNTGRVLSYRSVGLESGILLTTNLNGVINVPTTGPSTSSFHPTLAYTALAATENAGGMAMHVRLAELNLEFHSYTLYHRYGMFHLYDKIRTLRHITNNARCVVLVRDNNNESRWTSASNLISPRITAKHHNIINNSSLSNFDVRTFDALNLSTAEQIISAELMNRGGGVTCFSLLAQDVAGNDNTTITRIPESNILVIATNSNSIQCVIDFPVVVLKDEETRQITINDATNISRNLHQLSIDKIVNVLSVLSLSVDSLILPANITRSANSFYLQNDHGNQFKFMY.

The protein belongs to the baculoviridae E66 family.

It is found in the virion membrane. Component of the polyhedra envelope. The polypeptide is Occlusion-derived virus envelope protein E66 (Leucania separata nucleopolyhedrovirus (LsNPV)).